The chain runs to 132 residues: Large ribosomal subunit protein bL17 (132 aa).

The protein belongs to the bacterial ribosomal protein bL17 family. In terms of assembly, part of the 50S ribosomal subunit. Contacts protein L32.

This is Large ribosomal subunit protein bL17 from Polaromonas sp. (strain JS666 / ATCC BAA-500).